The following is a 502-amino-acid chain: Cysteine--tRNA ligase (502 aa).

Cysteine 30 lines the Zn(2+) pocket. The 'HIGH' region signature appears at 32–42; it reads PTIYDYAHIGN. Zn(2+) contacts are provided by cysteine 224, histidine 263, and glutamate 267. The short motif at 296 to 300 is the 'KMSKS' region element; the sequence is KMSKS. Lysine 299 is an ATP binding site.

It belongs to the class-I aminoacyl-tRNA synthetase family. As to quaternary structure, monomer. It depends on Zn(2+) as a cofactor.

It localises to the cytoplasm. It catalyses the reaction tRNA(Cys) + L-cysteine + ATP = L-cysteinyl-tRNA(Cys) + AMP + diphosphate. The chain is Cysteine--tRNA ligase from Bartonella quintana (strain Toulouse) (Rochalimaea quintana).